The chain runs to 498 residues: NAD(P)H-quinone oxidoreductase subunit 2, chloroplastic (498 aa).

The next 14 helical transmembrane spans lie at 18–38, 51–71, 87–107, 111–131, 134–154, 168–188, 211–231, 244–264, 278–298, 306–326, 337–357, 379–399, 411–431, and 470–490; these read LTILPEIILILGLVAVVVIDL, ISMVTLLASAVILLWQWGFFT, FFLLICSLLSISSSVDYILCS, LAEFLLFKLAAGLGGMVLSCA, LVTIYVSLEFLALSSCFLSGY, FLLMSGASSSLLLYGFSLLYG, IIYLSAAFTTAGTAFKLSLFP, PTPVVAFFSVTSKVAALALFT, WHVAVGLLATFSMILGNLIAV, MLAFSSISQIGYIMIGVLSAD, YTFIYILMNLGTFACITLFGL, FSLVLCLLSLGGMPPLSGFFG, GLYSLVLVALVTSVISIYYYL, and IAMIICALASTLSGIFIDPII.

Belongs to the complex I subunit 2 family. In terms of assembly, NDH is composed of at least 16 different subunits, 5 of which are encoded in the nucleus.

It localises to the plastid. The protein localises to the chloroplast thylakoid membrane. It carries out the reaction a plastoquinone + NADH + (n+1) H(+)(in) = a plastoquinol + NAD(+) + n H(+)(out). The catalysed reaction is a plastoquinone + NADPH + (n+1) H(+)(in) = a plastoquinol + NADP(+) + n H(+)(out). Its function is as follows. NDH shuttles electrons from NAD(P)H:plastoquinone, via FMN and iron-sulfur (Fe-S) centers, to quinones in the photosynthetic chain and possibly in a chloroplast respiratory chain. The immediate electron acceptor for the enzyme in this species is believed to be plastoquinone. Couples the redox reaction to proton translocation, and thus conserves the redox energy in a proton gradient. In Adiantum capillus-veneris (Maidenhair fern), this protein is NAD(P)H-quinone oxidoreductase subunit 2, chloroplastic.